A 572-amino-acid chain; its full sequence is NADH-ubiquinone oxidoreductase chain 5 (572 aa).

16 helical membrane-spanning segments follow: residues 4–24, 44–64, 86–106, 107–127, 147–167, 170–190, 217–237, 239–259, 268–288, 294–314, 337–357, 372–394, 422–442, 457–477, 490–510, and 552–572; these read ISFV…LYFL, IVMT…VLMI, IMLV…PNLI, SILL…IYFQ, VALL…YIFY, IMQN…AAMT, SSTL…ILST, WLGQ…GLGA, IIAL…SMGF, FHLL…GAII, SACF…AGFY, NMFS…FRLV, MGLL…IFPF, LFVC…NLFF, FLGS…FYPL, and LKIY…LLFL.

The protein belongs to the complex I subunit 5 family.

It is found in the mitochondrion inner membrane. It catalyses the reaction a ubiquinone + NADH + 5 H(+)(in) = a ubiquinol + NAD(+) + 4 H(+)(out). In terms of biological role, core subunit of the mitochondrial membrane respiratory chain NADH dehydrogenase (Complex I) that is believed to belong to the minimal assembly required for catalysis. Complex I functions in the transfer of electrons from NADH to the respiratory chain. The immediate electron acceptor for the enzyme is believed to be ubiquinone. This Drosophila melanogaster (Fruit fly) protein is NADH-ubiquinone oxidoreductase chain 5 (mt:ND5).